The sequence spans 1097 residues: Platelet-derived growth factor receptor beta (1097 aa).

The signal sequence occupies residues 1–31; the sequence is MGLPEVMPASVLRGQLLLFVLLLLGPQISQG. Ig-like C2-type domains lie at 32–119, 128–209, and 213–308; these read LVIT…YIFV, PMDS…YSLQ, and INVS…INVT. Residues 32-531 lie on the Extracellular side of the membrane; it reads LVITPPGPEF…VVPHSLPFKV (500 aa). 3 N-linked (GlcNAc...) asparagine glycosylation sites follow: Asn44, Asn88, and Asn102. A disulfide bridge links Cys53 with Cys99. Cysteines 148 and 189 form a disulfide. Asn214 is a glycosylation site (N-linked (GlcNAc...) asparagine). Cysteines 234 and 290 form a disulfide. Residues Asn291, Asn306, Asn353, Asn370, Asn444, Asn467, and Asn478 are each glycosylated (N-linked (GlcNAc...) asparagine). The region spanning 415–523 is the Ig-like C2-type 4 domain; it reads PVRVLELSES…GRDSQEVTVV (109 aa). Cysteines 435 and 507 form a disulfide. Residues 532–552 traverse the membrane as a helical segment; that stretch reads VVISAILALVVLTVISLIILI. The Cytoplasmic segment spans residues 553 to 1097; it reads MLWQRKPRYE…PLAEAEDSFL (545 aa). 3 positions are modified to phosphotyrosine; by autocatalysis: Tyr561, Tyr578, and Tyr580. The Protein kinase domain occupies 599–961; sequence LVLGRTLGSG…QLVLLLERLL (363 aa). Residues 605-613 and Lys633 each bind ATP; that span reads LGSGAFGQV. Tyr685 bears the Phosphotyrosine; by ABL1 and ABL2 mark. A phosphotyrosine; by autocatalysis mark is found at Tyr715, Tyr739, Tyr750, Tyr762, Tyr770, Tyr774, and Tyr777. The active-site Proton acceptor is Asp825. Phosphotyrosine; by autocatalysis is present on Tyr856. Phosphotyrosine; by ABL1 and ABL2 occurs at positions 933 and 969. A phosphotyrosine; by autocatalysis mark is found at Tyr1008 and Tyr1020. Residues 1016-1097 are disordered; it reads TDNDYIIPLP…PLAEAEDSFL (82 aa). Residues 1042–1059 are compositionally biased toward polar residues; the sequence is SLASSTLNEVNTSSTISC. Positions 1072-1081 are enriched in low complexity; the sequence is EPEAQLEQPQ.

Belongs to the protein kinase superfamily. Tyr protein kinase family. CSF-1/PDGF receptor subfamily. In terms of assembly, interacts with homodimeric PDGFB and PDGFD, and with heterodimers formed by PDGFA and PDGFB. May also interact with homodimeric PDGFC. Monomer in the absence of bound ligand. Interaction with homodimeric PDGFB, heterodimers formed by PDGFA and PDGFB or homodimeric PDGFD, leads to receptor dimerization, where both PDGFRA homodimers and heterodimers with PDGFRB are observed. Interacts with SH2B2/APS. Interacts directly (tyrosine phosphorylated) with SHB. Interacts (tyrosine phosphorylated) with PIK3R1 and RASA1. Interacts (tyrosine phosphorylated) with CBL. Interacts (tyrosine phosphorylated) with SRC and SRC family kinases. Interacts (tyrosine phosphorylated) with PIK3C2B, maybe indirectly. Interacts (tyrosine phosphorylated) with SHC1, GRB7, GRB10 and NCK1. Interaction with GRB2 is mediated by SHC1. Interacts (via C-terminus) with NHERF1. In terms of processing, N-glycosylated. Ubiquitinated. After autophosphorylation, the receptor is polyubiquitinated, leading to its degradation. Post-translationally, autophosphorylated on tyrosine residues upon ligand binding. Autophosphorylation occurs in trans, i.e. one subunit of the dimeric receptor phosphorylates tyrosine residues on the other subunit. Phosphorylation at Tyr-578, and to a lesser degree, Tyr-580 is important for interaction with SRC. Phosphorylation at Tyr-715 is important for interaction with GRB2. Phosphorylation at Tyr-739 and Tyr-750 is important for interaction with PIK3R1. Phosphorylation at Tyr-750 is important for interaction with NCK1. Phosphorylation at Tyr-770 and Tyr-856 is important for interaction with RASA1/GAP. Phosphorylation at Tyr-856 is important for efficient phosphorylation of PLCG1 and PTPN11, resulting in increased phosphorylation of AKT1, MAPK1/ERK2 and/or MAPK3/ERK1, PDCD6IP/ALIX and STAM, and in increased cell proliferation. Phosphorylation at Tyr-1008 is important for interaction with PTPN11. Phosphorylation at Tyr-1008 and Tyr-1020 is important for interaction with PLCG1. Dephosphorylated by PTPRJ at Tyr-750, Tyr-856, Tyr-1008 and Tyr-1020. Dephosphorylated by PTPN2 at Tyr-578 and Tyr-1020.

The protein localises to the cell membrane. The protein resides in the cytoplasmic vesicle. It is found in the lysosome lumen. The catalysed reaction is L-tyrosyl-[protein] + ATP = O-phospho-L-tyrosyl-[protein] + ADP + H(+). Its activity is regulated as follows. Present in an inactive conformation in the absence of bound ligand. Binding of PDGFB and/or PDGFD leads to dimerization and activation by autophosphorylation on tyrosine residues. Its function is as follows. Tyrosine-protein kinase that acts as a cell-surface receptor for homodimeric PDGFB and PDGFD and for heterodimers formed by PDGFA and PDGFB, and plays an essential role in the regulation of embryonic development, cell proliferation, survival, differentiation, chemotaxis and migration. Plays an essential role in blood vessel development by promoting proliferation, migration and recruitment of pericytes and smooth muscle cells to endothelial cells. Plays a role in the migration of vascular smooth muscle cells and the formation of neointima at vascular injury sites. Required for normal development of the cardiovascular system. Required for normal recruitment of pericytes (mesangial cells) in the kidney glomerulus, and for normal formation of a branched network of capillaries in kidney glomeruli. Promotes rearrangement of the actin cytoskeleton and the formation of membrane ruffles. Binding of its cognate ligands - homodimeric PDGFB, heterodimers formed by PDGFA and PDGFB or homodimeric PDGFD -leads to the activation of several signaling cascades; the response depends on the nature of the bound ligand and is modulated by the formation of heterodimers between PDGFRA and PDGFRB. Phosphorylates PLCG1, PIK3R1, PTPN11, RASA1/GAP, CBL, SHC1 and NCK1. Activation of PLCG1 leads to the production of the cellular signaling molecules diacylglycerol and inositol 1,4,5-trisphosphate, mobilization of cytosolic Ca(2+) and the activation of protein kinase C. Phosphorylation of PIK3R1, the regulatory subunit of phosphatidylinositol 3-kinase, leads to the activation of the AKT1 signaling pathway. Phosphorylation of SHC1, or of the C-terminus of PTPN11, creates a binding site for GRB2, resulting in the activation of HRAS, RAF1 and down-stream MAP kinases, including MAPK1/ERK2 and/or MAPK3/ERK1. Promotes phosphorylation and activation of SRC family kinases. Promotes phosphorylation of PDCD6IP/ALIX and STAM. Receptor signaling is down-regulated by protein phosphatases that dephosphorylate the receptor and its down-stream effectors, and by rapid internalization of the activated receptor. The polypeptide is Platelet-derived growth factor receptor beta (Pdgfrb) (Rattus norvegicus (Rat)).